We begin with the raw amino-acid sequence, 290 residues long: 3-deoxy-manno-octulosonate cytidylyltransferase, mitochondrial (290 aa).

Residues 1–50 constitute a mitochondrion transit peptide; the sequence is MSVCSSSSSSQKTWIVNGILAGTAIAAAIGARAYLGRSKKFRSRVVGIIP.

It belongs to the KdsB family. Requires Mg(2+) as cofactor. In terms of tissue distribution, expressed in roots, leaves, stems and siliques.

It localises to the mitochondrion outer membrane. The catalysed reaction is 3-deoxy-alpha-D-manno-oct-2-ulosonate + CTP = CMP-3-deoxy-beta-D-manno-octulosonate + diphosphate. Its pathway is nucleotide-sugar biosynthesis; CMP-3-deoxy-D-manno-octulosonate biosynthesis; CMP-3-deoxy-D-manno-octulosonate from 3-deoxy-D-manno-octulosonate and CTP: step 1/1. Inhibited by 2beta-deoxy-Kdo. Its function is as follows. Catalyzes the production of the sugar nucleotide CMP-3-deoxy-D-manno-octulosonate (CMP-KDO). CTP is the preferred nucleotide donor, but it can partially be replaced with UTP. Activates KDO during the biosynthesis of rhamnogalacturonan II (RG-II), a structurally complex pectic polysaccharide of the primary cell wall. RG-II is essential for the cell wall integrity of rapidly growing tissues and pollen tube growth and elongation. This Arabidopsis thaliana (Mouse-ear cress) protein is 3-deoxy-manno-octulosonate cytidylyltransferase, mitochondrial.